The primary structure comprises 400 residues: Queuine tRNA-ribosyltransferase (400 aa).

D93 acts as the Proton acceptor in catalysis. Residues 93–97 (DSGGF), D147, Q190, and G217 each bind substrate. The tract at residues 248–254 (GVGSPED) is RNA binding. Catalysis depends on D267, which acts as the Nucleophile. Residues 272 to 276 (TRIAR) form an RNA binding; important for wobble base 34 recognition region. Residues C305, C307, C310, and H336 each contribute to the Zn(2+) site. Residues 375-400 (RRERARAAGGAGHAPGPAEPLLPENR) are disordered. Positions 388–400 (APGPAEPLLPENR) are enriched in low complexity.

This sequence belongs to the queuine tRNA-ribosyltransferase family. As to quaternary structure, homodimer. Within each dimer, one monomer is responsible for RNA recognition and catalysis, while the other monomer binds to the replacement base PreQ1. It depends on Zn(2+) as a cofactor.

It carries out the reaction 7-aminomethyl-7-carbaguanine + guanosine(34) in tRNA = 7-aminomethyl-7-carbaguanosine(34) in tRNA + guanine. It participates in tRNA modification; tRNA-queuosine biosynthesis. Its function is as follows. Catalyzes the base-exchange of a guanine (G) residue with the queuine precursor 7-aminomethyl-7-deazaguanine (PreQ1) at position 34 (anticodon wobble position) in tRNAs with GU(N) anticodons (tRNA-Asp, -Asn, -His and -Tyr). Catalysis occurs through a double-displacement mechanism. The nucleophile active site attacks the C1' of nucleotide 34 to detach the guanine base from the RNA, forming a covalent enzyme-RNA intermediate. The proton acceptor active site deprotonates the incoming PreQ1, allowing a nucleophilic attack on the C1' of the ribose to form the product. After dissociation, two additional enzymatic reactions on the tRNA convert PreQ1 to queuine (Q), resulting in the hypermodified nucleoside queuosine (7-(((4,5-cis-dihydroxy-2-cyclopenten-1-yl)amino)methyl)-7-deazaguanosine). This chain is Queuine tRNA-ribosyltransferase, found in Symbiobacterium thermophilum (strain DSM 24528 / JCM 14929 / IAM 14863 / T).